Reading from the N-terminus, the 767-residue chain is Cullin-1 (767 aa).

In terms of domain architecture, Cullin neddylation spans 699 to 760; the sequence is DRKLLLQSAI…EKEYLERQGR (62 aa). Residue Lys-713 forms a Glycyl lysine isopeptide (Lys-Gly) (interchain with G-Cter in NEDD8) linkage.

It belongs to the cullin family. Component of multiple Cul1-RING E3 ubiquitin-protein ligase complexes commonly known as SCF (SKP1-CUL1-F-box) complexes, consisting of cul1, skp1, pip1 and a variable F-box domain-containing protein as substrate-specific subunit. Binds to the pop1 homodimer, the pop2 homodimer and the pop1/pop2 heterodimer forming the SCF(pop1-pop2) complex. Interacts with pof3, pof14 and skp1. Neddylated; enhancing the ubiquitin-ligase activity.

It is found in the cytoplasm. It functions in the pathway protein modification; protein ubiquitination. In terms of biological role, core component of multiple cullin-RING-based SCF (SKP1-CUL1-F-box protein) E3 ubiquitin-protein ligase complexes, which mediate the ubiquitination of target proteins. The functional specificity of the SCF complex depends on the F-box protein as substrate recognition component. SCF(pop1-pop2) is required for the maintenance of ploidy and directs ubiquitination of cig2. The chain is Cullin-1 (cul1) from Schizosaccharomyces pombe (strain 972 / ATCC 24843) (Fission yeast).